A 531-amino-acid chain; its full sequence is Poly(A)-specific ribonuclease PNLDC1 (531 aa).

4 residues coordinate Mg(2+): Asp28, Glu30, Asp271, and Asp365. A helical transmembrane segment spans residues 506–526 (ITCLLQVCSIVTTWAMIAFLL).

Belongs to the CAF1 family. Requires Mg(2+) as cofactor. Specifically expressed in embryonic stem cells. Highly expressed in testis.

The protein resides in the endoplasmic reticulum membrane. The catalysed reaction is Exonucleolytic cleavage of poly(A) to 5'-AMP.. In terms of biological role, 3'-exoribonuclease that has a preference for poly(A) tails of mRNAs, thereby efficiently degrading poly(A) tails. Exonucleolytic degradation of the poly(A) tail is often the first step in the decay of eukaryotic mRNAs and is also used to silence certain maternal mRNAs translationally during oocyte maturation and early embryonic development. May act as a regulator of multipotency in embryonic stem cells. Is a critical factor for proper spermatogenesis, involved in pre-piRNAs processing to generate mature piRNAs. This chain is Poly(A)-specific ribonuclease PNLDC1, found in Mus musculus (Mouse).